The chain runs to 353 residues: Uroporphyrinogen decarboxylase (353 aa).

Substrate is bound by residues 30 to 34 (RQAGR), aspartate 79, tyrosine 154, serine 209, and histidine 332.

The protein belongs to the uroporphyrinogen decarboxylase family. In terms of assembly, homodimer.

Its subcellular location is the cytoplasm. It carries out the reaction uroporphyrinogen III + 4 H(+) = coproporphyrinogen III + 4 CO2. It functions in the pathway porphyrin-containing compound metabolism; protoporphyrin-IX biosynthesis; coproporphyrinogen-III from 5-aminolevulinate: step 4/4. In terms of biological role, catalyzes the decarboxylation of four acetate groups of uroporphyrinogen-III to yield coproporphyrinogen-III. This Mycobacterium marinum (strain ATCC BAA-535 / M) protein is Uroporphyrinogen decarboxylase.